A 164-amino-acid chain; its full sequence is SsrA-binding protein (164 aa).

The tract at residues K141–R164 is disordered. The span at K145 to I158 shows a compositional bias: basic and acidic residues.

This sequence belongs to the SmpB family.

The protein localises to the cytoplasm. Required for rescue of stalled ribosomes mediated by trans-translation. Binds to transfer-messenger RNA (tmRNA), required for stable association of tmRNA with ribosomes. tmRNA and SmpB together mimic tRNA shape, replacing the anticodon stem-loop with SmpB. tmRNA is encoded by the ssrA gene; the 2 termini fold to resemble tRNA(Ala) and it encodes a 'tag peptide', a short internal open reading frame. During trans-translation Ala-aminoacylated tmRNA acts like a tRNA, entering the A-site of stalled ribosomes, displacing the stalled mRNA. The ribosome then switches to translate the ORF on the tmRNA; the nascent peptide is terminated with the 'tag peptide' encoded by the tmRNA and targeted for degradation. The ribosome is freed to recommence translation, which seems to be the essential function of trans-translation. The protein is SsrA-binding protein of Prochlorococcus marinus (strain MIT 9301).